The sequence spans 90 residues: Conotoxin Ca8.2 (90 aa).

The signal sequence occupies residues 1–21 (MMLKMGAMFVLLLLFILPSSQ). The propeptide occupies 22 to 46 (QEGDVQARKTHLKRGFYGTLAMSTR). Residue Gln-89 is modified to Glutamine amide.

It belongs to the conotoxin S superfamily. Contains 5 disulfide bonds. In terms of tissue distribution, expressed by the venom duct.

It localises to the secreted. In Conus caracteristicus (Characteristic cone), this protein is Conotoxin Ca8.2.